The chain runs to 496 residues: Glutamyl-tRNA(Gln) amidotransferase subunit A (496 aa).

Catalysis depends on charge relay system residues lysine 79 and serine 159. Serine 183 serves as the catalytic Acyl-ester intermediate.

This sequence belongs to the amidase family. GatA subfamily. Heterotrimer of A, B and C subunits.

The enzyme catalyses L-glutamyl-tRNA(Gln) + L-glutamine + ATP + H2O = L-glutaminyl-tRNA(Gln) + L-glutamate + ADP + phosphate + H(+). Allows the formation of correctly charged Gln-tRNA(Gln) through the transamidation of misacylated Glu-tRNA(Gln) in organisms which lack glutaminyl-tRNA synthetase. The reaction takes place in the presence of glutamine and ATP through an activated gamma-phospho-Glu-tRNA(Gln). This Ruegeria pomeroyi (strain ATCC 700808 / DSM 15171 / DSS-3) (Silicibacter pomeroyi) protein is Glutamyl-tRNA(Gln) amidotransferase subunit A.